A 241-amino-acid polypeptide reads, in one-letter code: B9 domain-containing protein 1 (241 aa).

Positions 1 to 42 are disordered; that stretch reads MSASEGISLPGNEETTPPHEKHKQKAKKAKKKSRSAKESVPN. Residues 20-34 show a composition bias toward basic residues; it reads EKHKQKAKKAKKKSR. In terms of domain architecture, C2 B9-type spans 53–197; the sequence is FSLSIVGQIV…TSWLLRREPE (145 aa).

The protein belongs to the B9D family. As to quaternary structure, probable component of the tectonic-like complex (also named MKS complex), composed of B9d1, B9d2, Cc2d2a, Mks1 and tctn. As to expression, expressed in type I sensory neurons (at protein level). Expressed in spermatids and spermatocytes (at protein level).

It localises to the cytoplasm. It is found in the cytoskeleton. The protein resides in the cilium basal body. Its function is as follows. Probable component of the tectonic-like complex (also named MKS complex), a complex localized at the transition zone of primary cilia. Required for ciliary structure and function. This chain is B9 domain-containing protein 1, found in Drosophila melanogaster (Fruit fly).